We begin with the raw amino-acid sequence, 213 residues long: 3-isopropylmalate dehydratase small subunit (213 aa).

Belongs to the LeuD family. LeuD type 1 subfamily. Heterodimer of LeuC and LeuD.

The catalysed reaction is (2R,3S)-3-isopropylmalate = (2S)-2-isopropylmalate. Its pathway is amino-acid biosynthesis; L-leucine biosynthesis; L-leucine from 3-methyl-2-oxobutanoate: step 2/4. Functionally, catalyzes the isomerization between 2-isopropylmalate and 3-isopropylmalate, via the formation of 2-isopropylmaleate. The protein is 3-isopropylmalate dehydratase small subunit of Neisseria meningitidis serogroup A / serotype 4A (strain DSM 15465 / Z2491).